The following is a 194-amino-acid chain: Protein cholesin (194 aa).

Residues 1–83 (MAKQKRKVPE…RKKEERQRLR (83 aa)) are disordered. Residues Ser23 and Ser59 each carry the phosphoserine modification. Positions 61-83 (EEQRVLERKLKKERKKEERQRLR) are enriched in basic and acidic residues. Phosphoserine occurs at positions 97 and 175.

In terms of tissue distribution, secreted from the instestine, secretion is induced by feeding and cholesterol absorption.

The protein resides in the secreted. Functionally, hormone secreted from the intestine in response to cholesterol, where it acts to inhibit cholesterol synthesis in the liver and VLDL secretion,leading to a reduction in circulating cholesterol levels. Acts through binding to its receptor, GPR146. This is Protein cholesin from Homo sapiens (Human).